The chain runs to 244 residues: Putative esophageal gland cell secretory protein 6 (244 aa).

The first 22 residues, Met1–Ser22, serve as a signal peptide directing secretion. An intrachain disulfide couples Cys88 to Cys91.

Belongs to the SelWTH family. SELT subfamily.

In Heterodera glycines (Soybean cyst nematode worm), this protein is Putative esophageal gland cell secretory protein 6 (HSP6).